A 345-amino-acid chain; its full sequence is 3-isopropylmalate dehydrogenase (345 aa).

74–87 (GPKWDGLPRKIRPE) contacts NAD(+). Substrate is bound by residues Arg94, Arg104, Arg132, and Asp217. Asp217, Asp241, and Asp245 together coordinate Mg(2+). Residue 274 to 286 (GSAPDIAGKGLAN) participates in NAD(+) binding.

Belongs to the isocitrate and isopropylmalate dehydrogenases family. LeuB type 1 subfamily. As to quaternary structure, homodimer. Requires Mg(2+) as cofactor. The cofactor is Mn(2+).

It is found in the cytoplasm. It carries out the reaction (2R,3S)-3-isopropylmalate + NAD(+) = 4-methyl-2-oxopentanoate + CO2 + NADH. It participates in amino-acid biosynthesis; L-leucine biosynthesis; L-leucine from 3-methyl-2-oxobutanoate: step 3/4. Catalyzes the oxidation of 3-carboxy-2-hydroxy-4-methylpentanoate (3-isopropylmalate) to 3-carboxy-4-methyl-2-oxopentanoate. The product decarboxylates to 4-methyl-2 oxopentanoate. In Thermus thermophilus (strain ATCC BAA-163 / DSM 7039 / HB27), this protein is 3-isopropylmalate dehydrogenase (leuB).